Reading from the N-terminus, the 538-residue chain is CTP synthase (538 aa).

An amidoligase domain region spans residues 1 to 266 (MRTKYIFITG…DQKIVDLLNI (266 aa)). Position 14 (Ser-14) interacts with CTP. Ser-14 contributes to the UTP binding site. ATP-binding positions include 15–20 (SLGKGL) and Asp-72. Residues Asp-72 and Glu-140 each contribute to the Mg(2+) site. CTP is bound by residues 147-149 (DIE), 187-192 (KTKPTQ), and Lys-223. Residues 187–192 (KTKPTQ) and Lys-223 each bind UTP. 239–241 (KDV) provides a ligand contact to ATP. The Glutamine amidotransferase type-1 domain maps to 291 to 533 (NIAIVGKYVN…IEAALRYRKK (243 aa)). Gly-353 is a binding site for L-glutamine. Cys-380 functions as the Nucleophile; for glutamine hydrolysis in the catalytic mechanism. Residues 381-384 (LGMQ), Glu-404, and Arg-461 each bind L-glutamine. Residues His-506 and Glu-508 contribute to the active site.

Belongs to the CTP synthase family. Homotetramer.

The catalysed reaction is UTP + L-glutamine + ATP + H2O = CTP + L-glutamate + ADP + phosphate + 2 H(+). It catalyses the reaction L-glutamine + H2O = L-glutamate + NH4(+). It carries out the reaction UTP + NH4(+) + ATP = CTP + ADP + phosphate + 2 H(+). It participates in pyrimidine metabolism; CTP biosynthesis via de novo pathway; CTP from UDP: step 2/2. Its activity is regulated as follows. Allosterically activated by GTP, when glutamine is the substrate; GTP has no effect on the reaction when ammonia is the substrate. The allosteric effector GTP functions by stabilizing the protein conformation that binds the tetrahedral intermediate(s) formed during glutamine hydrolysis. Inhibited by the product CTP, via allosteric rather than competitive inhibition. Functionally, catalyzes the ATP-dependent amination of UTP to CTP with either L-glutamine or ammonia as the source of nitrogen. Regulates intracellular CTP levels through interactions with the four ribonucleotide triphosphates. The sequence is that of CTP synthase from Syntrophus aciditrophicus (strain SB).